A 222-amino-acid polypeptide reads, in one-letter code: UPF0758 protein YicR (222 aa).

One can recognise an MPN domain in the interval 100–222 (PLLSPEMTRE…YVSFAERGWI (123 aa)). Residues His-171, His-173, and Asp-184 each coordinate Zn(2+). A JAMM motif motif is present at residues 171-184 (HNHPSGCAEPSKAD).

The protein belongs to the UPF0758 family. YicR subfamily.

The chain is UPF0758 protein YicR from Escherichia coli (strain K12 / MC4100 / BW2952).